A 538-amino-acid polypeptide reads, in one-letter code: Serine/threonine-protein phosphatase 5 (538 aa).

TPR repeat units lie at residues 13–46 (AEEF…NSNN), 48–80 (VYWA…DSRY), and 81–114 (SKGY…SPND). 2 helical membrane passes run 163–183 (SSMP…VVAV) and 185–205 (GFAT…TFWW). Positions 282, 284, 311, and 343 each coordinate Mn(2+). The Proton donor role is filled by histidine 344. Histidine 392 and histidine 467 together coordinate Mn(2+).

This sequence belongs to the PPP phosphatase family. PP-5 (PP-T) subfamily. In terms of assembly, interacts with PHYA and PHYB, mostly when they are phosphorylated and in Pfr forms. Requires Mn(2+) as cofactor.

The protein resides in the endoplasmic reticulum membrane. Its subcellular location is the nucleus membrane. It is found in the cytoplasm. The protein localises to the nucleus. It localises to the nucleoplasm. The protein resides in the nucleus speckle. The catalysed reaction is O-phospho-L-seryl-[protein] + H2O = L-seryl-[protein] + phosphate. The enzyme catalyses O-phospho-L-threonyl-[protein] + H2O = L-threonyl-[protein] + phosphate. Its activity is regulated as follows. Activated by arachidonic acid (AA). In terms of biological role, isoform 2 dephosphorylates phosphorylated phytochromes, with a preference toward Pfr forms, and enhances phytochrome-mediated photoresponses, probably by enhancing their stability and their binding affinity for light signal transducers such as NDPK2. Can use para-nitrophenylphosphate (pNPP) as substrate. The chain is Serine/threonine-protein phosphatase 5 (PAPP5) from Arabidopsis thaliana (Mouse-ear cress).